The sequence spans 51 residues: Large ribosomal subunit protein eL39z (51 aa).

This sequence belongs to the eukaryotic ribosomal protein eL39 family.

This chain is Large ribosomal subunit protein eL39z (RPL39A), found in Oryza sativa subsp. japonica (Rice).